A 903-amino-acid chain; its full sequence is Disintegrin and metalloproteinase domain-containing protein 12 (903 aa).

Residues 1-31 (MAERPARRAPPARALLLALAGALLAPRAARG) form the signal peptide. The propeptide occupies 32–205 (MSLWDQRGTY…SQMRARRHKR (174 aa)). N-linked (GlcNAc...) asparagine glycosylation is found at asparagine 112, asparagine 147, and asparagine 157. Residues 175–182 (GLCGSQHN) carry the Cysteine switch motif. A Zn(2+)-binding site is contributed by cysteine 177. N-linked (GlcNAc...) asparagine glycans are attached at residues asparagine 182 and asparagine 185. Topologically, residues 206–706 (ETLKMTKYVE…GPIRQADNQG (501 aa)) are extracellular. One can recognise a Peptidase M12B domain in the interval 212 to 414 (KYVELVIVAD…GMGMCLFNLP (203 aa)). Cystine bridges form between cysteine 323-cysteine 409, cysteine 365-cysteine 393, and cysteine 367-cysteine 376. Histidine 348 lines the Zn(2+) pocket. Residue glutamate 349 is part of the active site. 2 residues coordinate Zn(2+): histidine 352 and histidine 358. One can recognise a Disintegrin domain in the interval 422–508 (GRKCGNGYVE…HCPANVYLHD (87 aa)). An N-linked (GlcNAc...) asparagine glycan is attached at asparagine 450. The cysteines at positions 480 and 500 are disulfide-linked. N-linked (GlcNAc...) asparagine glycosylation is present at asparagine 649. The region spanning 654-686 (GVHKCAMQCHGRGVCNNRKNCHCEAHWAPPFCD) is the EGF-like domain. Cystine bridges form between cysteine 658–cysteine 668, cysteine 662–cysteine 674, and cysteine 676–cysteine 685. A helical membrane pass occupies residues 707–727 (LTVGILVSILCLLAAGFVVYL). Residues 728 to 903 (KRKTLMRLLF…PRPSHNAYIK (176 aa)) are Cytoplasmic-facing. Disordered regions lie at residues 753–790 (SRTPSGPHLGQAHHTPGKGLLMNRAPHFNTPKDRHSLK) and 819–903 (HQTP…AYIK). 2 short sequence motifs (SH3-binding; class II) span residues 824 to 830 (APSGPAR) and 846 to 852 (KPSPPQK). 3 consecutive short sequence motifs (SH3-binding; class I) follow at residues 830–837 (RPLPASPA), 852–858 (KPLPADP), and 881–887 (RPAPIRP). Pro residues predominate over residues 847–856 (PSPPQKPLPA). Position 901 is a phosphotyrosine; by SRC (tyrosine 901).

Interacts with alpha-actinin-2 and with syndecans. Interacts with SH3PXD2A. Interacts with FST3. Interacts with RACK1; the interaction is required for PKC-dependent translocation of ADAM12 to the cell membrane. Zn(2+) is required as a cofactor. Post-translationally, the precursor is cleaved by a furin endopeptidase. Expressed during early developing mesenchymal cells that give rise to skeletal muscle, bones and visceral organs. Not expressed in adult normal muscle but expressed in regenerating muscle.

It localises to the membrane. Its function is as follows. Involved in skeletal muscle regeneration, specifically at the onset of cell fusion. Also involved in macrophage-derived giant cells (MGC) and osteoclast formation from mononuclear precursors. The sequence is that of Disintegrin and metalloproteinase domain-containing protein 12 (Adam12) from Mus musculus (Mouse).